The primary structure comprises 963 residues: Ras-interacting protein 1 (963 aa).

The segment covering 1–10 (MLSGERKEGG) has biased composition (basic and acidic residues). Disordered stretches follow at residues 1-22 (MLSG…LPVG) and 35-118 (LGRR…AQRW). The span at 41 to 57 (SAASVKSSSSDTGSRSS) shows a compositional bias: low complexity. Arginine 94 bears the Omega-N-methylarginine mark. Gly residues predominate over residues 96 to 113 (SGTGTTGSSGAGGPGTPG). Positions 144-259 (PPGVLKIFGA…RRFELRGREE (116 aa)) constitute a Ras-associating domain. Phosphoserine is present on residues serine 188, serine 280, and serine 292. Residues 267-356 (AFGAADSEGT…LSMAPGAADA (90 aa)) are disordered. The segment covering 290–301 (AASGGAALASPG) has biased composition (low complexity). Residues 302–313 (PGTGSGAPAGSG) show a composition bias toward gly residues. Low complexity predominate over residues 320-333 (NLSLRRSVSELSLQ). A phosphoserine mark is found at serine 326, serine 328, serine 331, and serine 419. Residues 600 to 897 (GRLARLIKEA…PPAEREAVDT (298 aa)) enclose the Dilute domain.

As to quaternary structure, interacts with Ras family members that have been activated by GTP binding. Interacts with HRAS, RAP1A, RAP2, RRAS, RAF1 and RRAS2. Interacts with MYH9 and ARHGAP29. As to expression, highly expressed in heart. Detected at lower levels in placenta and pancreas.

Its subcellular location is the cytoplasm. It is found in the perinuclear region. It localises to the golgi apparatus. The protein localises to the golgi stack. Functionally, required for the proper formation of vascular structures that develop via both vasculogenesis and angiogenesis. Acts as a critical and vascular-specific regulator of GTPase signaling, cell architecture, and adhesion, which is essential for endothelial cell morphogenesis and blood vessel tubulogenesis. Regulates the activity of Rho GTPases in part by recruiting ARHGAP29 and suppressing RhoA signaling and dampening ROCK and MYH9 activities in endothelial cells. May act as effector for Golgi-bound HRAS and other Ras-like proteins. May promote HRAS-mediated transformation. Negative regulator of amino acid starvation-induced autophagy. This chain is Ras-interacting protein 1 (RASIP1), found in Homo sapiens (Human).